The following is a 748-amino-acid chain: Phosphoribosylformylglycinamidine synthase subunit PurL (748 aa).

Residue H47 is part of the active site. The ATP site is built by Y50 and K90. E92 is a Mg(2+) binding site. Residues 93-96 (SHNH) and R115 each bind substrate. The active-site Proton acceptor is H94. Position 116 (D116) interacts with Mg(2+). Substrate is bound at residue Q240. D268 contacts Mg(2+). Residue 312–314 (ESQ) coordinates substrate. N500 and G537 together coordinate ATP. Residue N538 coordinates Mg(2+). S540 lines the substrate pocket.

The protein belongs to the FGAMS family. Monomer. Part of the FGAM synthase complex composed of 1 PurL, 1 PurQ and 2 PurS subunits.

The protein resides in the cytoplasm. It catalyses the reaction N(2)-formyl-N(1)-(5-phospho-beta-D-ribosyl)glycinamide + L-glutamine + ATP + H2O = 2-formamido-N(1)-(5-O-phospho-beta-D-ribosyl)acetamidine + L-glutamate + ADP + phosphate + H(+). Its pathway is purine metabolism; IMP biosynthesis via de novo pathway; 5-amino-1-(5-phospho-D-ribosyl)imidazole from N(2)-formyl-N(1)-(5-phospho-D-ribosyl)glycinamide: step 1/2. Part of the phosphoribosylformylglycinamidine synthase complex involved in the purines biosynthetic pathway. Catalyzes the ATP-dependent conversion of formylglycinamide ribonucleotide (FGAR) and glutamine to yield formylglycinamidine ribonucleotide (FGAM) and glutamate. The FGAM synthase complex is composed of three subunits. PurQ produces an ammonia molecule by converting glutamine to glutamate. PurL transfers the ammonia molecule to FGAR to form FGAM in an ATP-dependent manner. PurS interacts with PurQ and PurL and is thought to assist in the transfer of the ammonia molecule from PurQ to PurL. The chain is Phosphoribosylformylglycinamidine synthase subunit PurL from Leptospira biflexa serovar Patoc (strain Patoc 1 / Ames).